The primary structure comprises 375 residues: Probable butyrate kinase 2 (375 aa).

This sequence belongs to the acetokinase family.

It is found in the cytoplasm. The enzyme catalyses butanoate + ATP = butanoyl phosphate + ADP. This Thermotoga maritima (strain ATCC 43589 / DSM 3109 / JCM 10099 / NBRC 100826 / MSB8) protein is Probable butyrate kinase 2.